The chain runs to 80 residues: Acyl carrier protein (80 aa).

The Carrier domain occupies 4 to 79 (EAILEKVRSI…DAVKYIEDKQ (76 aa)). Serine 39 bears the O-(pantetheine 4'-phosphoryl)serine mark.

This sequence belongs to the acyl carrier protein (ACP) family. Post-translationally, 4'-phosphopantetheine is transferred from CoA to a specific serine of apo-ACP by AcpS. This modification is essential for activity because fatty acids are bound in thioester linkage to the sulfhydryl of the prosthetic group.

It is found in the cytoplasm. It participates in lipid metabolism; fatty acid biosynthesis. In terms of biological role, carrier of the growing fatty acid chain in fatty acid biosynthesis. The protein is Acyl carrier protein of Prochlorococcus marinus (strain SARG / CCMP1375 / SS120).